A 253-amino-acid chain; its full sequence is Small ribosomal subunit protein uS2 (253 aa).

Residues 226 to 253 (QGADNADVEKELSESVEENSAEEVDDAE) are disordered. Positions 239–253 (ESVEENSAEEVDDAE) are enriched in acidic residues.

The protein belongs to the universal ribosomal protein uS2 family.

The sequence is that of Small ribosomal subunit protein uS2 from Lactobacillus delbrueckii subsp. bulgaricus (strain ATCC 11842 / DSM 20081 / BCRC 10696 / JCM 1002 / NBRC 13953 / NCIMB 11778 / NCTC 12712 / WDCM 00102 / Lb 14).